Here is a 420-residue protein sequence, read N- to C-terminus: MLKIGVIADDFTGATDIASFLVENGMPTVQINDVPTGTQPEGCDAVVISLKTRSCPAQEAIKQSLAALVWLKKQGCQQVYFKYCSTFDSTAEGNIGPVTDALMVALDTSFTVISPALPVNGRTVYQGYLFVMNHLLAESGMRHHPINPMTDSYLPRLMEAQAQGRCGVIPAQTLDEGVAATRAALSRLQQEGYRYAVLDALNERHLEIQGEVLRDAPLVTGGSGLAMGLARQWAKHGVSQARSAGYPLSGRAVVLSGSCSQMTNQQVAFYRQHAPTRDVDVARCLSSETREAYAEALAQWVLSQDSELAPMISATASTQALAAIQQQYGATEASHAVEALFSLLAARLAEGGITRFIVAGGETSGVVTQSLGITGFHIGPCISPGVPWVNALHAPVSLALKSGNFGDESFFIRAQREFQV.

ATP-binding positions include Ser-258, 360 to 363 (GGET), and Gly-403.

The protein belongs to the four-carbon acid sugar kinase family.

The enzyme catalyses 3-dehydro-L-erythronate + ATP = 3-dehydro-4-O-phospho-L-erythronate + ADP + H(+). It catalyses the reaction 3-dehydro-D-erythronate + ATP = 3-dehydro-4-O-phospho-D-erythronate + ADP + H(+). Functionally, catalyzes the ATP-dependent phosphorylation of 3-oxo-tetronate to 3-oxo-tetronate 4-phosphate. This Salmonella typhimurium (strain LT2 / SGSC1412 / ATCC 700720) protein is 3-oxo-tetronate kinase.